The sequence spans 297 residues: MEPRALVTALSLGLSLCSLGLLVTAIFTDHWYETDPRRHKESCERSRAGADPPDQKNRLMPLSHLPLRDSPPLGRRLLPGGPGRSDPESWRSLLGLGGLDAECGRPLFATYSGLWRKCYFLGIDRDIDTLILKGIAQRCTAIKYHFSQPIRLRNIPFNLTKTIQQDEWHLLHLRRITAGFLGMAVAVLLCGCIVATVSFFWEESLTQHVAGLLFLMTGIFCTISLCTYAASVSYDLNRVPKLIYSLPHDVEHGYSWSIFCAWCSLGFIVAAGGLCIAYPFISRTKIAHLKSGRDSTV.

The first 25 residues, 1–25 (MEPRALVTALSLGLSLCSLGLLVTA), serve as a signal peptide directing secretion. Topologically, residues 26–179 (IFTDHWYETD…LLHLRRITAG (154 aa)) are extracellular. The span at 41 to 57 (ESCERSRAGADPPDQKN) shows a compositional bias: basic and acidic residues. Positions 41 to 86 (ESCERSRAGADPPDQKNRLMPLSHLPLRDSPPLGRRLLPGGPGRSD) are disordered. Positions 68–79 (RDSPPLGRRLLP) are enriched in low complexity. N158 carries N-linked (GlcNAc...) asparagine glycosylation. A helical membrane pass occupies residues 180 to 200 (FLGMAVAVLLCGCIVATVSFF). Residues 201–208 (WEESLTQH) lie on the Cytoplasmic side of the membrane. Residues 209–229 (VAGLLFLMTGIFCTISLCTYA) traverse the membrane as a helical segment. Over 230–257 (ASVSYDLNRVPKLIYSLPHDVEHGYSWS) the chain is Extracellular. A helical membrane pass occupies residues 258-278 (IFCAWCSLGFIVAAGGLCIAY). At 279-297 (PFISRTKIAHLKSGRDSTV) the chain is on the cytoplasmic side.

The protein belongs to the TMEM178 family. Interacts with STIM1. Highly expressed in the bone and its expression increases during osteoclastogenesis.

It localises to the endoplasmic reticulum membrane. Acts as a negative regulator of osteoclast differentiation in basal and inflammatory conditions by regulating TNFSF11-induced Ca (2+) fluxes, thereby controlling the induction of NFATC1. The protein is Transmembrane protein 178A (Tmem178a) of Mus musculus (Mouse).